Here is a 470-residue protein sequence, read N- to C-terminus: Arginine ADP-riboxanase OspC1 (470 aa).

NAD(+) is bound by residues His-138, Gln-139, Ser-140, Leu-144, Ile-157, Asn-167, Phe-183, His-201, Phe-206, Asp-226, and Glu-320. Glu-320 is an active-site residue. 3 ANK repeats span residues 363–392, 399–431, and 438–467; these read IALQALFLSITNQKEDVALYILSNFEITRQ, HELYDIEYLLSAHNSSCKVLEYFINKGLVDVNT, and SGDCMLDNAIKYENAEMIKLLLKYGATSDN.

It belongs to the OspC family. As to quaternary structure, interacts with host calmodulin (CALM1, CALM2 and/or CALM3); specifically interacts with the apo form of calmodulin, preventing calcium-binding.

It is found in the secreted. The protein localises to the host nucleus. It catalyses the reaction L-arginyl-[protein] + NAD(+) = ADP-riboxanated L-argininyl-[protein] + nicotinamide + NH4(+) + H(+). Its function is as follows. ADP-riboxanase effector that mediates arginine ADP-riboxanation of host caspases. ADP-riboxanation of host apoptotic caspases (CASP3, CASP8 and CASP9) prevents their activation, thereby inhibiting host cell extrinsic and intrinsic apoptosis. Does not catalyze ADP-riboxanation of host CASP4/CASP11. Independently of its ADP-riboxanase activity, acts as an inhibitor of calcium signaling by inhibiting host calmodulin, preventing activation of the JAK-STAT signaling pathway in response to interferon-beta. Mechanistically, acts by binding to the apo form of calmodulin, preventing calcium-binding and ability to activate host CaMK2 (CAMKII), which is required to stimulate the JAK-STAT signaling pathway in response to interferon-beta. The protein is Arginine ADP-riboxanase OspC1 of Shigella flexneri.